Reading from the N-terminus, the 369-residue chain is Flagellar P-ring protein (369 aa).

An N-terminal signal peptide occupies residues 1 to 23; sequence MIKQFAVSLLLVLLTLVTTTASA.

This sequence belongs to the FlgI family. As to quaternary structure, the basal body constitutes a major portion of the flagellar organelle and consists of four rings (L,P,S, and M) mounted on a central rod.

The protein localises to the periplasm. It is found in the bacterial flagellum basal body. In terms of biological role, assembles around the rod to form the L-ring and probably protects the motor/basal body from shearing forces during rotation. This is Flagellar P-ring protein from Photorhabdus laumondii subsp. laumondii (strain DSM 15139 / CIP 105565 / TT01) (Photorhabdus luminescens subsp. laumondii).